Consider the following 576-residue polypeptide: Proline--tRNA ligase (576 aa).

It belongs to the class-II aminoacyl-tRNA synthetase family. ProS type 1 subfamily. As to quaternary structure, homodimer.

The protein localises to the cytoplasm. It catalyses the reaction tRNA(Pro) + L-proline + ATP = L-prolyl-tRNA(Pro) + AMP + diphosphate. Its function is as follows. Catalyzes the attachment of proline to tRNA(Pro) in a two-step reaction: proline is first activated by ATP to form Pro-AMP and then transferred to the acceptor end of tRNA(Pro). As ProRS can inadvertently accommodate and process non-cognate amino acids such as alanine and cysteine, to avoid such errors it has two additional distinct editing activities against alanine. One activity is designated as 'pretransfer' editing and involves the tRNA(Pro)-independent hydrolysis of activated Ala-AMP. The other activity is designated 'posttransfer' editing and involves deacylation of mischarged Ala-tRNA(Pro). The misacylated Cys-tRNA(Pro) is not edited by ProRS. The polypeptide is Proline--tRNA ligase (Thiobacillus denitrificans (strain ATCC 25259 / T1)).